The following is a 191-amino-acid chain: Ribonuclease HII (191 aa).

An RNase H type-2 domain is found at 16 to 191 (INLIGIDEAG…KLHRKSFKLL (176 aa)). Residues Asp22, Glu23, and Asp110 each coordinate a divalent metal cation.

It belongs to the RNase HII family. Mn(2+) serves as cofactor. Requires Mg(2+) as cofactor.

Its subcellular location is the cytoplasm. It carries out the reaction Endonucleolytic cleavage to 5'-phosphomonoester.. Functionally, endonuclease that specifically degrades the RNA of RNA-DNA hybrids. The sequence is that of Ribonuclease HII from Campylobacter jejuni subsp. jejuni serotype O:6 (strain 81116 / NCTC 11828).